An 882-amino-acid polypeptide reads, in one-letter code: Translation initiation factor IF-2 (882 aa).

Residues 57 to 211 (YIPANKTKDK…KDKSKPKVAT (155 aa)) are disordered. Positions 104–115 (TTSEKQKDKGEQ) are enriched in basic and acidic residues. Over residues 199 to 211 (RHKKDKSKPKVAT) the composition is skewed to basic residues. Positions 381 to 550 (ERPPVVTIMG…LIQAEVLELK (170 aa)) constitute a tr-type G domain. The segment at 390–397 (GHVDHGKT) is G1. Position 390–397 (390–397 (GHVDHGKT)) interacts with GTP. The tract at residues 415–419 (GITQH) is G2. A G3 region spans residues 436-439 (DTPG). Residues 436–440 (DTPGH) and 490–493 (NKMD) each bind GTP. Residues 490–493 (NKMD) are G4. A G5 region spans residues 526-528 (SAK).

The protein belongs to the TRAFAC class translation factor GTPase superfamily. Classic translation factor GTPase family. IF-2 subfamily.

It localises to the cytoplasm. Functionally, one of the essential components for the initiation of protein synthesis. Protects formylmethionyl-tRNA from spontaneous hydrolysis and promotes its binding to the 30S ribosomal subunits. Also involved in the hydrolysis of GTP during the formation of the 70S ribosomal complex. The protein is Translation initiation factor IF-2 of Helicobacter hepaticus (strain ATCC 51449 / 3B1).